The following is a 1343-amino-acid chain: Kinesin-like protein KIF7 (1343 aa).

The region spanning 15 to 349 (PVRVALRVRP…LNYASRAQNI (335 aa)) is the Kinesin motor domain. Residue 94–101 (GQTGSGKT) participates in ATP binding. Disordered stretches follow at residues 356 to 382 (NWRPEAERPPEETASGARGPPRHRSET), 451 to 483 (RSALSSASGPDSGIESASVEDQAAQGAGGRKED), and 611 to 639 (EVNRLGSGSSAASEEEEEEEEPPRRTLHL). Positions 358–479 (RPEAERPPEE…EDQAAQGAGG (122 aa)) are interaction with DLG5. Residues 358-1206 (RPEAERPPEE…LGRYMWINQE (849 aa)) are interaction with SMO. Residues 480–542 (RKEDEGAQQL…ELRLRLELVR (63 aa)) adopt a coiled-coil conformation. Residues 513–775 (AMEQYKLQSD…LRELEGKELQ (263 aa)) are sufficient for interaction with NPHP1. 2 coiled-coil regions span residues 698–1057 (ASEW…AAIE) and 1109–1211 (TLRE…KQKL). Position 898 is a phosphoserine (S898). Disordered stretches follow at residues 1219–1238 (HSRGGEKRSLCSEGRQAPGN) and 1310–1343 (GEAGLPWNFGPLSKPRRELRRASPGMIDVRKNPL).

Belongs to the TRAFAC class myosin-kinesin ATPase superfamily. Kinesin family. KIF27 subfamily. In terms of assembly, can form homodimers and interacts with microtubules. Interacts with GLI1, GLI2, GLI3, SMO and SUFU. Interacts with NPHP1. Interacts with SMO and DLG5 (via PDZ4 or guanylate kinase-like domain). In terms of processing, polyubiquitinated by UBR3. Embryonic stem cells, melanotic melanoma and Jurkat T-cells. Expressed in heart, lung, liver, kidney, testis, retina, placenta, pancreas, colon, small intestin, prostate and thymus.

It localises to the cell projection. The protein localises to the cilium. The protein resides in the cytoplasm. It is found in the cytoskeleton. Its subcellular location is the cilium basal body. Its function is as follows. Essential for hedgehog signaling regulation: acts both as a negative and positive regulator of sonic hedgehog (Shh) and Indian hedgehog (Ihh) pathways, acting downstream of SMO, through both SUFU-dependent and -independent mechanisms. Involved in the regulation of microtubular dynamics. Required for proper organization of the ciliary tip and control of ciliary localization of SUFU-GLI2 complexes. Required for localization of GLI3 to cilia in response to Shh. Negatively regulates Shh signaling by preventing inappropriate activation of the transcriptional activator GLI2 in the absence of ligand. Positively regulates Shh signaling by preventing the processing of the transcription factor GLI3 into its repressor form. In keratinocytes, promotes the dissociation of SUFU-GLI2 complexes, GLI2 nuclear translocation and Shh signaling activation. Involved in the regulation of epidermal differentiation and chondrocyte development. The chain is Kinesin-like protein KIF7 (KIF7) from Homo sapiens (Human).